Reading from the N-terminus, the 335-residue chain is MSLSETATQAPQPANVLLEVNDLRVTFATPDGDVTAVNDLNFTLRAGETLGIVGESGSGKSQTAFALMGLLATNGRIGGSATFNGREILNLPERELNTLRAEQISMIFQDPMTSLNPYMRVGEQLMEVLMLHKGMSKAEAFEESVRMLDAVKMPEARKRMKMYPHEFSGGMRQRVMIAMALLCRPKLLIADEPTTALDVTVQAQIMTLLNELKREFNTAIIMITHDLGVVAGICDKVLVMYAGRTMEYGKARDVFYQPVHPYSIGLLNAVPRLDSEGAEMLTIPGNPPNLLRLPKGCPFQPRCPHAMEICNNAPPLEAFSPGRLRACFKPVEELL.

Residues 18–267 form the ABC transporter domain; that stretch reads LEVNDLRVTF…PVHPYSIGLL (250 aa). Residue 54–61 participates in ATP binding; sequence GESGSGKS.

This sequence belongs to the ABC transporter superfamily. As to quaternary structure, the complex is composed of two ATP-binding proteins (OppD and OppF), two transmembrane proteins (OppB and OppC) and a solute-binding protein (OppA).

It localises to the cell inner membrane. The catalysed reaction is a [peptide](out) + ATP + H2O = a [peptide](in) + ADP + phosphate + H(+). The enzyme catalyses L-alanyl-gamma-D-glutamyl-meso-2,6-diaminopimelate(out) + ATP + H2O = L-alanyl-gamma-D-glutamyl-meso-2,6-diaminopimelate(in) + ADP + phosphate + H(+). Its function is as follows. Part of the ABC transporter complex OppABCDF involved in the uptake of oligopeptides, including the cell wall murein tripeptide L-alanyl-gamma-D-glutamyl-meso-diaminopimelate. Responsible for energy coupling to the transport system. Plays an important nutritional role and is involved in the recycling of cell wall peptides. Binds ATP. The polypeptide is Oligopeptide transport ATP-binding protein OppD (Salmonella typhimurium (strain LT2 / SGSC1412 / ATCC 700720)).